The primary structure comprises 856 residues: Phospholipase D gamma 2 (856 aa).

Positions 21–161 (PLATSSGSLM…CSGNRIEGLF (141 aa)) constitute a C2 domain. Aspartate 223 provides a ligand contact to Ca(2+). The PLD phosphodiesterase 1 domain occupies 362 to 397 (TIYTHHQKTMIVDAEAAQNRRKIVAFVGGLDLCNGR). Active-site residues include histidine 367, lysine 369, and aspartate 374. Histidine 367 provides a ligand contact to a 1,2-diacyl-sn-glycero-3-phosphate. Histidine 403 and histidine 435 together coordinate Ca(2+). 2 residues coordinate a 1,2-diacyl-sn-glycero-3-phosphate: glutamine 562 and histidine 707. In terms of domain architecture, PLD phosphodiesterase 2 spans 702–729 (FMIYVHSKGMVVDDEFVLIGSANINQRS). Active-site residues include histidine 707, lysine 709, and aspartate 714. Glutamate 770 lines the Ca(2+) pocket.

The protein belongs to the phospholipase D family. C2-PLD subfamily. Ca(2+) is required as a cofactor. Highly expressed in roots and flowers, moderately in stems, leaves and seedlings and low in siliques. Not detected in seeds.

The protein resides in the cytoplasm. It is found in the membrane. It catalyses the reaction a 1,2-diacyl-sn-glycero-3-phosphocholine + H2O = a 1,2-diacyl-sn-glycero-3-phosphate + choline + H(+). With respect to regulation, inhibited by neomycin. Hydrolyzes glycerol-phospholipids at the terminal phosphodiesteric bond to generate phosphatidic acids (PA). Plays an important role in various cellular processes, including phytohormone action, vesicular trafficking, secretion, cytoskeletal arrangement, meiosis, tumor promotion, pathogenesis, membrane deterioration and senescence. Can use phosphatidylserine but prefers ethanolamine-containing lipids as substrates. Can use phosphatidylcholine (PC) as substrates in the presence of phosphatidylethanolamine (PE) and PIP2. Involved in membrane lipid modulation under aluminum (Al) stress and negatively modulate plant tolerance to Al. This is Phospholipase D gamma 2 from Arabidopsis thaliana (Mouse-ear cress).